The primary structure comprises 464 residues: Protein FAM90A22 (464 aa).

Disordered regions lie at residues 1 to 43 (MMAR…PRLK), 70 to 389 (PATL…HDGA), and 415 to 437 (HSPEKPGAFLAQSPHVSEKSEAP). Basic and acidic residues-rich tracts occupy residues 74–89 (GKKEGKENLKPWKPRA) and 97–114 (NKDKGEKEERPRQQDPQR). The segment covering 182 to 197 (SLSPLRKTSLSSSSSL) has biased composition (low complexity).

The protein belongs to the FAM90 family.

This Homo sapiens (Human) protein is Protein FAM90A22.